A 393-amino-acid chain; its full sequence is Translation initiation factor eIF2B subunit beta (393 aa).

The tract at residues 105 to 125 is disordered; sequence VSSSNSSSPSQKRDIPSNEKL. Residues serine 106, serine 108, and serine 112 each carry the phosphoserine modification.

The protein belongs to the eIF-2B alpha/beta/delta subunits family. In terms of assembly, component of the translation initiation factor 2B (eIF2B) complex which is a heterodecamer of two sets of five different subunits: alpha, beta, gamma, delta and epsilon. Subunits alpha, beta and delta comprise a regulatory subcomplex and subunits epsilon and gamma comprise a catalytic subcomplex. Within the complex, the hexameric regulatory complex resides at the center, with the two heterodimeric catalytic subcomplexes bound on opposite sides.

The protein resides in the cytoplasm. It localises to the cytosol. Its function is as follows. Acts as a component of the translation initiation factor 2B (eIF2B) complex, which catalyzes the exchange of GDP for GTP on the eukaryotic initiation factor 2 (eIF2) complex gamma subunit. Its guanine nucleotide exchange factor activity is repressed when bound to eIF2 complex phosphorylated on the alpha subunit, thereby limiting the amount of methionyl-initiator methionine tRNA available to the ribosome and consequently global translation is repressed. The sequence is that of Translation initiation factor eIF2B subunit beta (tif222) from Schizosaccharomyces pombe (strain 972 / ATCC 24843) (Fission yeast).